Consider the following 474-residue polypeptide: Glutamate--tRNA ligase (474 aa).

Residues 9–19 carry the 'HIGH' region motif; that stretch reads PSPTGYLHVGG. The 'KMSKS' region motif lies at 240–244; the sequence is KLSKR. Position 243 (K243) interacts with ATP.

Belongs to the class-I aminoacyl-tRNA synthetase family. Glutamate--tRNA ligase type 1 subfamily. As to quaternary structure, monomer.

It localises to the cytoplasm. It carries out the reaction tRNA(Glu) + L-glutamate + ATP = L-glutamyl-tRNA(Glu) + AMP + diphosphate. Catalyzes the attachment of glutamate to tRNA(Glu) in a two-step reaction: glutamate is first activated by ATP to form Glu-AMP and then transferred to the acceptor end of tRNA(Glu). The protein is Glutamate--tRNA ligase of Vibrio cholerae serotype O1 (strain ATCC 39315 / El Tor Inaba N16961).